The primary structure comprises 649 residues: Threonine--tRNA ligase (649 aa).

A TGS domain is found at 1 to 61; the sequence is MIKITFPDGA…TQDGSIEIVT (61 aa). The interval 242 to 540 is catalytic; it reads DHRKLGKELD…LIETYKGAFP (299 aa). Zn(2+)-binding residues include Cys336, His387, and His517.

The protein belongs to the class-II aminoacyl-tRNA synthetase family. As to quaternary structure, homodimer. It depends on Zn(2+) as a cofactor.

Its subcellular location is the cytoplasm. The catalysed reaction is tRNA(Thr) + L-threonine + ATP = L-threonyl-tRNA(Thr) + AMP + diphosphate + H(+). In terms of biological role, catalyzes the attachment of threonine to tRNA(Thr) in a two-step reaction: L-threonine is first activated by ATP to form Thr-AMP and then transferred to the acceptor end of tRNA(Thr). Also edits incorrectly charged L-seryl-tRNA(Thr). This chain is Threonine--tRNA ligase, found in Streptococcus mutans serotype c (strain ATCC 700610 / UA159).